The sequence spans 331 residues: GTP 3',8-cyclase (331 aa).

A Radical SAM core domain is found at Ser-9–Pro-233. GTP is bound at residue Arg-18. [4Fe-4S] cluster contacts are provided by Cys-25 and Cys-29. S-adenosyl-L-methionine is bound at residue Tyr-31. A [4Fe-4S] cluster-binding site is contributed by Cys-32. Arg-67 contributes to the GTP binding site. Residue Gly-71 coordinates S-adenosyl-L-methionine. Thr-98 contacts GTP. Residue Ser-122 coordinates S-adenosyl-L-methionine. A GTP-binding site is contributed by Lys-159. Met-193 contributes to the S-adenosyl-L-methionine binding site. [4Fe-4S] cluster is bound by residues Cys-257 and Cys-260. Arg-262 to Arg-264 is a binding site for GTP. Cys-274 is a binding site for [4Fe-4S] cluster.

This sequence belongs to the radical SAM superfamily. MoaA family. In terms of assembly, monomer and homodimer. It depends on [4Fe-4S] cluster as a cofactor.

It catalyses the reaction GTP + AH2 + S-adenosyl-L-methionine = (8S)-3',8-cyclo-7,8-dihydroguanosine 5'-triphosphate + 5'-deoxyadenosine + L-methionine + A + H(+). It functions in the pathway cofactor biosynthesis; molybdopterin biosynthesis. Its function is as follows. Catalyzes the cyclization of GTP to (8S)-3',8-cyclo-7,8-dihydroguanosine 5'-triphosphate. This is GTP 3',8-cyclase from Saccharophagus degradans (strain 2-40 / ATCC 43961 / DSM 17024).